Reading from the N-terminus, the 266-residue chain is Exosome complex component Rrp42 (266 aa).

This sequence belongs to the RNase PH family. Rrp42 subfamily. Component of the archaeal exosome complex. Forms a hexameric ring-like arrangement composed of 3 Rrp41-Rrp42 heterodimers. The hexameric ring associates with a trimer of Rrp4 and/or Csl4 subunits.

It is found in the cytoplasm. Its function is as follows. Non-catalytic component of the exosome, which is a complex involved in RNA degradation. Contributes to the structuring of the Rrp41 active site. This is Exosome complex component Rrp42 from Methanosarcina mazei (strain ATCC BAA-159 / DSM 3647 / Goe1 / Go1 / JCM 11833 / OCM 88) (Methanosarcina frisia).